A 34-amino-acid chain; its full sequence is uncharacterized protein (34 aa).

Residues 1–12 are compositionally biased toward basic and acidic residues; the sequence is MFSHFEVSENRP. Positions 1–21 are disordered; the sequence is MFSHFEVSENRPRKQPRRKRI.

This is an uncharacterized protein from Saccharomyces cerevisiae (strain ATCC 204508 / S288c) (Baker's yeast).